Here is a 429-residue protein sequence, read N- to C-terminus: MSRSAPLLLNPISAISGTVNVPGSKSLSNRALLLAAVANGETHLTNLLDSEDIRHMLKALTQLGVNYRLSDDKTECWVQGLGRGFSVDNLETLFLGNAGTAMRPLCAVLATSIGEFELTGEPRMEERPIGALVDSLRQAGAQITYLKNEGYPPLKMKGMALKGGNISVEGAVSSQFLTALLMAAPLFEHDSVINIVGELVSKPYIDITLNTMAQFGITVENNNYQSFTVKGNQQYQAAGDFLVEGDASSASYFLAAGAIKGGTVRVTGVGKKSIQGDIRFADVLEKMGAKITWGDDYIEVTGAPLTAVDMDMNHIPDAAMTIATTALFAEGTTSIRNIYNWRVKETDRLAAMACELRKVGAEVIEGQDYITITPPNTLIQTDIDTYDDHRVAMCFSLVALSDTPVTINDPDCTAKTFPDYFTRLKQISA.

3-phosphoshikimate contacts are provided by K25, S26, and R30. Position 25 (K25) interacts with phosphoenolpyruvate. The phosphoenolpyruvate site is built by G99 and R127. Residues S173, S174, Q175, S201, D317, N340, and K344 each coordinate 3-phosphoshikimate. Q175 contacts phosphoenolpyruvate. D317 functions as the Proton acceptor in the catalytic mechanism. Phosphoenolpyruvate-binding residues include R348, R390, and K415.

Belongs to the EPSP synthase family. As to quaternary structure, monomer.

The protein resides in the cytoplasm. It catalyses the reaction 3-phosphoshikimate + phosphoenolpyruvate = 5-O-(1-carboxyvinyl)-3-phosphoshikimate + phosphate. It functions in the pathway metabolic intermediate biosynthesis; chorismate biosynthesis; chorismate from D-erythrose 4-phosphate and phosphoenolpyruvate: step 6/7. In terms of biological role, catalyzes the transfer of the enolpyruvyl moiety of phosphoenolpyruvate (PEP) to the 5-hydroxyl of shikimate-3-phosphate (S3P) to produce enolpyruvyl shikimate-3-phosphate and inorganic phosphate. The chain is 3-phosphoshikimate 1-carboxyvinyltransferase from Pseudoalteromonas atlantica (strain T6c / ATCC BAA-1087).